The primary structure comprises 815 residues: MDEDEKDRAKRASRNKSEKKRRDQFNVLIKELSSMLPGNTRKMDKTTVLEKVIGFLQKHNEVSAQTEISEIQQDWKPSFLSNEEFTQLMLEALDGFIIAVTTGGSIIYVSDSITPLLGHLPCDVLDQNLLNFLPEQEHSEIYKMLSSCMLMTDSASSDCLKTDNELEFYCHLLRGSLNPKEFPTYEYIKFVGNFRSYSNVPNSTCNGFDEAVPRAYRASPGKQICFVATVRLATPQFLKEMCIVEEPLEEFTSRHSLEWKFLFLDHRAPPIIGYLPFEVLGTSGYDYYHIDDLELLARCHEHLMQFGKGKSCCYRFLTKGQQWIWLQTHYYITYHQWNSKPEFIVCTHMVVSYADVRVERRQEMGLEEVSSEVVSSALKDSGSSLDPEQHFNALDIGASILSASRTPSVSSRSSPKSSHTPKSDPASTPTKLTAEASTPLQRTSSTQQDLSAHRLSQPTALQASLPSQPSCELLPQQLLPQATLQSQPAPLAQFSAQFSMFQTIKDQLEQRTRILQANIRWQQEELQKIQEQLCLVQDSSVQMFLQQPAVSLSFSNIQQPEPQPLQQRPGVISQQQLVLSPQLPGQIASPQTPSQQVLREASVISSQGPKAERSTELTTGSSRPTRSTATLFGPSTSLSRRGPGPSSGPGASAAGCSHDQQLRLLLSQPIQPMMPTSCNARHPSDLSMAGSQAKYSQNQQMFQSLEVQTSSSGSPIVLMGQAVLNQGFATTPPSQSSSLPPMQLQHQQHQQQRYLQVQTPSSLHNEQTDSLLLSSYSPQQGNMGYHQTQQQQQQQQLPRRSNSLSESSNLPQPLR.

A compositionally biased stretch (basic and acidic residues) spans 1–10 (MDEDEKDRAK). The segment at 1 to 21 (MDEDEKDRAKRASRNKSEKKR) is disordered. The segment at 1 to 61 (MDEDEKDRAK…VIGFLQKHNE (61 aa)) is sufficient for heterodimer formation with BMAL1, E-box binding and for the effect of NADPH. Residues 9–59 (AKRASRNKSEKKRRDQFNVLIKELSSMLPGNTRKMDKTTVLEKVIGFLQKH) form the bHLH domain. The region spanning 82–152 (NEEFTQLMLE…KMLSSCMLMT (71 aa)) is the PAS 1 domain. 2 residues coordinate heme b: histidine 119 and histidine 171. The PAS 2 domain maps to 237–307 (FLKEMCIVEE…RCHEHLMQFG (71 aa)). A PAC domain is found at 311–354 (SCCYRFLTKGQQWIWLQTHYYITYHQWNSKPEFIVCTHMVVSYA). Positions 405 to 420 (RTPSVSSRSSPKSSHT) are enriched in low complexity. Disordered stretches follow at residues 405–467 (RTPS…SLPS), 584–656 (PGQI…AAGC), and 728–815 (FATT…QPLR). Polar residues-rich tracts occupy residues 425 to 462 (PAST…TALQ), 588 to 608 (ASPQ…SSQG), and 616 to 630 (ELTT…STAT). Low complexity-rich tracts occupy residues 633-655 (GPST…SAAG) and 732-752 (PPSQ…HQQQ). Over residues 753–786 (RYLQVQTPSSLHNEQTDSLLLSSYSPQQGNMGYH) the composition is skewed to polar residues. Over residues 787–815 (QTQQQQQQQQLPRRSNSLSESSNLPQPLR) the composition is skewed to low complexity.

In terms of assembly, component of the circadian clock oscillator which includes the CRY proteins, CLOCK or NPAS2, BMAL1 or BMAL2, CSNK1D and/or CSNK1E, TIMELESS and the PER proteins. Efficient DNA binding requires dimerization with another bHLH protein. Forms a heterodimer with BMAL1 and this heterodimerization is required for E-box-dependent transactivation. It depends on heme as a cofactor. In terms of tissue distribution, expressed in the retinal photoreceptor cells (at protein level). Expressed in the pineal gland and retina.

Its subcellular location is the nucleus. Its activity is regulated as follows. Carbon monoxide (CO) and the redox state of the cell can modulate the transcriptional activity of the NPAS2-BMAL1 heterodimer. NADH and NADPH enhance the DNA-binding activity of the heterodimer whereas CO binds the heme group in NPAS2 and inhibits the DNA-binding activity of the heterodimer. Transcriptional activator which forms a core component of the circadian clock. The circadian clock, an internal time-keeping system, regulates various physiological processes through the generation of approximately 24 hour circadian rhythms in gene expression, which are translated into rhythms in metabolism and behavior. It is derived from the Latin roots 'circa' (about) and 'diem' (day) and acts as an important regulator of a wide array of physiological functions including metabolism, sleep, body temperature, blood pressure, endocrine, immune, cardiovascular, and renal function. Consists of two major components: the central clock, residing in the suprachiasmatic nucleus (SCN) of the brain, and the peripheral clocks that are present in nearly every tissue and organ system. Both the central and peripheral clocks can be reset by environmental cues, also known as Zeitgebers (German for 'timegivers'). The predominant Zeitgeber for the central clock is light, which is sensed by retina and signals directly to the SCN. The central clock entrains the peripheral clocks through neuronal and hormonal signals, body temperature and feeding-related cues, aligning all clocks with the external light/dark cycle. Circadian rhythms allow an organism to achieve temporal homeostasis with its environment at the molecular level by regulating gene expression to create a peak of protein expression once every 24 hours to control when a particular physiological process is most active with respect to the solar day. Transcription and translation of core clock components (CLOCK, NPAS2, BMAL1, BMAL2, PER1, PER2, PER3, CRY1 and CRY2) plays a critical role in rhythm generation, whereas delays imposed by post-translational modifications (PTMs) are important for determining the period (tau) of the rhythms (tau refers to the period of a rhythm and is the length, in time, of one complete cycle). A diurnal rhythm is synchronized with the day/night cycle, while the ultradian and infradian rhythms have a period shorter and longer than 24 hours, respectively. Disruptions in the circadian rhythms contribute to the pathology of cardiovascular diseases, cancer, metabolic syndromes and aging. A transcription/translation feedback loop (TTFL) forms the core of the molecular circadian clock mechanism. Transcription factors, CLOCK or NPAS2 and BMAL1 or BMAL2, form the positive limb of the feedback loop, act in the form of a heterodimer and activate the transcription of core clock genes and clock-controlled genes (involved in key metabolic processes), harboring E-box elements (5'-CACGTG-3') within their promoters. The core clock genes: PER1/2/3 and CRY1/2 which are transcriptional repressors form the negative limb of the feedback loop and interact with the CLOCK|NPAS2-BMAL1|BMAL2 heterodimer inhibiting its activity and thereby negatively regulating their own expression. This heterodimer also activates nuclear receptors NR1D1/2 and RORA/B/G, which form a second feedback loop and which activate and repress BMAL1 transcription, respectively. NPAS2 positively regulates the circadian expression of AANAT in the retinal photoreceptor cells. This is Neuronal PAS domain-containing protein 2 (NPAS2) from Gallus gallus (Chicken).